A 291-amino-acid chain; its full sequence is Aliphatic sulfonates import ATP-binding protein SsuB 2 (291 aa).

Residues 26-247 (LRVRGIAKRY…APGLPALASI (222 aa)) form the ABC transporter domain. 58-65 (GRSGCGKS) contributes to the ATP binding site. Residues 264–291 (PAAPKAQTRHGPPRGATAQDTSPLQRIL) form a disordered region. Polar residues predominate over residues 281–291 (AQDTSPLQRIL).

This sequence belongs to the ABC transporter superfamily. Aliphatic sulfonates importer (TC 3.A.1.17.2) family. As to quaternary structure, the complex is composed of two ATP-binding proteins (SsuB), two transmembrane proteins (SsuC) and a solute-binding protein (SsuA).

The protein resides in the cell inner membrane. The catalysed reaction is ATP + H2O + aliphatic sulfonate-[sulfonate-binding protein]Side 1 = ADP + phosphate + aliphatic sulfonateSide 2 + [sulfonate-binding protein]Side 1.. Its function is as follows. Part of the ABC transporter complex SsuABC involved in aliphatic sulfonates import. Responsible for energy coupling to the transport system. The chain is Aliphatic sulfonates import ATP-binding protein SsuB 2 from Xanthomonas axonopodis pv. citri (strain 306).